A 169-amino-acid polypeptide reads, in one-letter code: CKLF-like MARVEL transmembrane domain-containing protein 1 (169 aa).

The region spanning 17 to 135 (NLKQPETAAA…DAFVVTTKMR (119 aa)) is the MARVEL domain. Transmembrane regions (helical) follow at residues 22–42 (ETAA…ITQA), 46–66 (FITI…IYVL), 79–99 (LLDL…AILA), and 110–130 (YVGG…AFVV).

This sequence belongs to the chemokine-like factor family. In terms of tissue distribution, highly expressed in testis.

It is found in the membrane. This is CKLF-like MARVEL transmembrane domain-containing protein 1 (CMTM1) from Homo sapiens (Human).